Here is a 262-residue protein sequence, read N- to C-terminus: Thiazole synthase (262 aa).

Catalysis depends on lysine 97, which acts as the Schiff-base intermediate with DXP. Residues glycine 158, 185-186 (AG), and 207-208 (NT) each bind 1-deoxy-D-xylulose 5-phosphate. The disordered stretch occupies residues 243–262 (DKAQASTPTVGQPFWHSAEY).

Belongs to the ThiG family. As to quaternary structure, homotetramer. Forms heterodimers with either ThiH or ThiS.

It is found in the cytoplasm. It carries out the reaction [ThiS sulfur-carrier protein]-C-terminal-Gly-aminoethanethioate + 2-iminoacetate + 1-deoxy-D-xylulose 5-phosphate = [ThiS sulfur-carrier protein]-C-terminal Gly-Gly + 2-[(2R,5Z)-2-carboxy-4-methylthiazol-5(2H)-ylidene]ethyl phosphate + 2 H2O + H(+). It participates in cofactor biosynthesis; thiamine diphosphate biosynthesis. Functionally, catalyzes the rearrangement of 1-deoxy-D-xylulose 5-phosphate (DXP) to produce the thiazole phosphate moiety of thiamine. Sulfur is provided by the thiocarboxylate moiety of the carrier protein ThiS. In vitro, sulfur can be provided by H(2)S. The protein is Thiazole synthase of Neisseria meningitidis serogroup B (strain ATCC BAA-335 / MC58).